We begin with the raw amino-acid sequence, 296 residues long: Sulfotransferase 1C2 (296 aa).

49–54 provides a ligand contact to 3'-phosphoadenylyl sulfate; sequence KSGTTW. 107–109 serves as a coordination point for substrate; that stretch reads RTH. Histidine 109 serves as the catalytic Proton acceptor. 3'-phosphoadenylyl sulfate is bound by residues arginine 131, serine 139, tyrosine 194, and 228-233; that span reads TSFEKM. At serine 139 the chain carries Phosphoserine. Serine 254 is modified (phosphoserine). 256–260 lines the 3'-phosphoadenylyl sulfate pocket; that stretch reads FMRKG.

The protein belongs to the sulfotransferase 1 family. As to expression, found in gastrointestinal tract tissues, liver and kidney.

The protein resides in the cytoplasm. The protein localises to the lysosome. It is found in the mitochondrion. It carries out the reaction a phenol + 3'-phosphoadenylyl sulfate = an aryl sulfate + adenosine 3',5'-bisphosphate + H(+). The catalysed reaction is cholesterol + 3'-phosphoadenylyl sulfate = cholesterol sulfate + adenosine 3',5'-bisphosphate + H(+). In terms of biological role, sulfotransferase that utilizes 3'-phospho-5'-adenylyl sulfate (PAPS) to catalyze the sulfate conjugation of phenolic compounds. Does not transfer sulfate to steroids, dopamine, acetaminophen, or alpha-naphthol. Except in mitochondria, where it can add sulfate to cholesterol producing cholesterol sulfate, which alters mitochondrial membrane organization, and impacts protein complex mobility increasing state-III respiration, thereby modulating mitochondrial respiration. Catalyzes the sulfation of the carcinogenic N-hydroxy-2-acetylaminofluorene leading to highly reactive intermediates capable of forming DNA adducts, potentially resulting in mutagenesis. This Oryctolagus cuniculus (Rabbit) protein is Sulfotransferase 1C2 (SULT1C2).